We begin with the raw amino-acid sequence, 618 residues long: MAGSFVTTLNDPRAFDIAQALLDGFNRHYKLFRQTSAEAKQRFEAADWHGQQRAQRERIEFYDLRVDEAAERLENEFRASSLSEETWQQVKLYYIGLLINHHQPELAETFFNSVTTKILHRSYFRNDFIFVRPAVSTEYIENEEPDSLPTYRAYYPSRPGSAEGLRETLLRIVDNYQLQREFEDLGRDIDYVLQAFRNQFGDVKLSANFQIQVLASLFFRNKGAYIVGKVINGFRETGFALPVLHNSRELLTIDTALFGEDELLLLFSFARAYFLVDMEIPSAYVQFLRSLMPRKPRWELYNALGLQKQGKNQFYRDFLYHLRHSSDSFRIAPGIKGMVMLVFDLPSFPFVFKVIKDFYPPQKDTTRELIQSKYQLVKTHDRVGRMADSLEYSNVAFPRQRFEPELIEEIRHFCPSLLEEEGDSLVLKHLYIERRMIPLNIYLQEATPEQMKHAVIEYGNAIKDLVAANIFPGDMLWKNFGVTRHGKVVFYDYDEIEYLTDCNFRKVPEPRTEEEEMSGDIWYSVGPKDVFPETFGPFLLGNPTVREVFMQHHAELLDPAFWQGRKDRIAGGYVHDVFPYDPHKRFRRPLGLGFGSLDAEAVSLHPASATTQLGHNPI.

ATP is bound by residues 332–338 (APGIKGM) and lysine 353. Aspartate 388 is a catalytic residue.

Belongs to the AceK family.

It localises to the cytoplasm. It catalyses the reaction L-seryl-[isocitrate dehydrogenase] + ATP = O-phospho-L-seryl-[isocitrate dehydrogenase] + ADP + H(+). Bifunctional enzyme which can phosphorylate or dephosphorylate isocitrate dehydrogenase (IDH) on a specific serine residue. This is a regulatory mechanism which enables bacteria to bypass the Krebs cycle via the glyoxylate shunt in response to the source of carbon. When bacteria are grown on glucose, IDH is fully active and unphosphorylated, but when grown on acetate or ethanol, the activity of IDH declines drastically concomitant with its phosphorylation. In Methylibium petroleiphilum (strain ATCC BAA-1232 / LMG 22953 / PM1), this protein is Isocitrate dehydrogenase kinase/phosphatase.